The chain runs to 159 residues: Probable minor fimbrial protein (159 aa).

Positions 1 to 6 (MKKMHG) are cleaved as a propeptide — leader sequence. The residue at position 7 (phenylalanine 7) is an N-methylphenylalanine. The chain crosses the membrane as a helical span at residues 7-29 (FTLIELMIVVAIIGVLASIALMQ). Disulfide bonds link cysteine 56–cysteine 71 and cysteine 140–cysteine 153.

The protein belongs to the N-Me-Phe pilin family. The pili are polar flexible filaments of about 5.4 nanometers diameter and 2.5 micrometers average length; they consist of only a single polypeptide chain arranged in a helical configuration of five subunits per turn in the assembled pilus.

It is found in the fimbrium. Its subcellular location is the membrane. This is Probable minor fimbrial protein (fimZ) from Dichelobacter nodosus (Bacteroides nodosus).